The following is a 1014-amino-acid chain: MPVYRIRGVDVDFPYDAYDCQITYMDRVLESLQQGKNALLESPTGTGKTLCLLCSALAWRRTFGEFLRGGGGGGGGGGGGGGGGSQQPPYGSQPSGSQHSGGSASQSSRYPVIIYASRTHSQLRQVIKELKATSYRPKMAVLGSREQMCIHEEVSKLRGRQQNNACHYLCKKRWCRHHNSVAEFMRNNSELGSEACDIEDLVNIGRTKGPCPYYISRELSKSVDILFAPYNYLIDPGNRRSLNGIPWDNAVLIFDEAHNLESICADAASFDLLPNNLSSCIAEAQECIQLCSAKRTFENSADKQFDPENYAILKALLMALEKKISEVVIDSKELGHTKPGNYIYEFLSELNITSETSKKLIDTIDGASLLLEEGNSAETGPGMKAKATVCRLETIRDILDIIFRGGGQSHAKYYRFHVNECQQNSGDALKVLGKVSRTLSWWCFNPGLAMEEFLKLGVRSIILTSGTLSPLDSLALELNLEFPVRLENPHVIASDQIWVGVVPVGPSGHPLNSSYRTRETLKYKQELGITIVNFARIVPDGLLVFFPSYSMMDKCINCWKDRNHENSSDEHTIWQRICKHKQPVIEPRQSSNFPNAIEDYAAKLRDSSTTGAIFFAVCRGKVSEGLDFADRAGRAVIVTGMPFATPTDPKVRLKRDYLDKLGSASNKNSKALTGEEWYVQQAARAVNQAVGRVIRHRHDYGAIIYCDERFVWQNYQSQMSYWLRPYIKCYKKYGEVVQGLTRFFRDKVSIDSSKPNETDFNDNIVLLADKHKPQETISALAVTTANENQRTALSVNPTTKRSNYIKFAQITPANRSTLSMKHGCSSTSQLLYSGDKLSTDAQVIDLAADVATSHLAGYRFKSLGPKKAKVMVGSKDVCFDDGSPKLQHNVESRALAGCLGEQSTASSKKSNITHAPGNSGAIHEKSGGQESNAGPAFLKLAREKLSTAEYRDFVEYMKALKLKTMHIKDSLDAIAKLFSSPERLPLLEGFRVFVPKNHLSLYEQLVQSYTVPNT.

Residues 7-308 (RGVDVDFPYD…NSADKQFDPE (302 aa)) form the Helicase ATP-binding domain. 42-49 (SPTGTGKT) contributes to the ATP binding site. A compositionally biased stretch (gly residues) spans 70-85 (GGGGGGGGGGGGGGGS). A disordered region spans residues 70-106 (GGGGGGGGGGGGGGGSQQPPYGSQPSGSQHSGGSASQ). Residues 86–106 (QQPPYGSQPSGSQHSGGSASQ) are compositionally biased toward low complexity. Cys-149, Cys-170, Cys-175, and Cys-211 together coordinate [4Fe-4S] cluster. The DEAH box motif lies at 255–258 (DEAH). The interval 906 to 930 (SSKKSNITHAPGNSGAIHEKSGGQE) is disordered.

This sequence belongs to the helicase family. RAD3/XPD subfamily.

The protein localises to the nucleus. It carries out the reaction ATP + H2O = ADP + phosphate + H(+). Its function is as follows. A probable ATP-dependent DNA helicase implicated in DNA replication, DNA repair and the maintenance of genomic stability. Acts as an anti-recombinase to counteract toxic recombination and limit crossover during meiosis. Regulates meiotic recombination and crossover homeostasis by physically dissociating strand invasion events and thereby promotes noncrossover repair by meiotic synthesis dependent strand annealing (SDSA) as well as disassembly of D loop recombination intermediates. The polypeptide is Regulator of telomere elongation helicase 1 homolog (Oryza sativa subsp. japonica (Rice)).